A 209-amino-acid chain; its full sequence is Redox-sensing transcriptional repressor Rex (209 aa).

A DNA-binding region (H-T-H motif) is located at residues 16 to 55; the sequence is LYYRFIQNLSLSGKQRVSSAELSEAVKVDSATIRRDFSYF. Position 90–95 (90–95) interacts with NAD(+); that stretch reads GVGNLG.

Belongs to the transcriptional regulatory Rex family. As to quaternary structure, homodimer.

The protein resides in the cytoplasm. Modulates transcription in response to changes in cellular NADH/NAD(+) redox state. This chain is Redox-sensing transcriptional repressor Rex, found in Bacillus anthracis (strain A0248).